Consider the following 87-residue polypeptide: MGLLDNLFGRKQQNSSSVAKERLLTVLVHDRVHLTPHDMEEMKREIIAVIERYVEVTNPEAIEVTLTRGEAADHLKADIPLGRSRQQ.

Belongs to the MinE family.

Functionally, prevents the cell division inhibition by proteins MinC and MinD at internal division sites while permitting inhibition at polar sites. This ensures cell division at the proper site by restricting the formation of a division septum at the midpoint of the long axis of the cell. The polypeptide is Cell division topological specificity factor (Herpetosiphon aurantiacus (strain ATCC 23779 / DSM 785 / 114-95)).